A 270-amino-acid polypeptide reads, in one-letter code: Diaminopimelate epimerase (270 aa).

The substrate site is built by asparagine 15, glutamine 49, and asparagine 66. Catalysis depends on cysteine 75, which acts as the Proton donor. Substrate-binding positions include 76–77 (GN), asparagine 155, asparagine 187, and 204–205 (ER). Cysteine 213 functions as the Proton acceptor in the catalytic mechanism. 214–215 (GS) contacts substrate.

It belongs to the diaminopimelate epimerase family. In terms of assembly, homodimer.

The protein localises to the cytoplasm. It carries out the reaction (2S,6S)-2,6-diaminopimelate = meso-2,6-diaminopimelate. Its pathway is amino-acid biosynthesis; L-lysine biosynthesis via DAP pathway; DL-2,6-diaminopimelate from LL-2,6-diaminopimelate: step 1/1. Catalyzes the stereoinversion of LL-2,6-diaminopimelate (L,L-DAP) to meso-diaminopimelate (meso-DAP), a precursor of L-lysine and an essential component of the bacterial peptidoglycan. The sequence is that of Diaminopimelate epimerase from Rickettsia felis (strain ATCC VR-1525 / URRWXCal2) (Rickettsia azadi).